A 166-amino-acid chain; its full sequence is Disulfide bond reductase DsbH (166 aa).

Residues 1–22 form the signal peptide; it reads MKFWLQGCAFVGCLLLTLPCCA. One can recognise a Thioredoxin domain in the interval 32–166; that stretch reads LQQTRPIAAA…SKVKSALKLR (135 aa). Cysteine 72 and cysteine 75 are disulfide-bonded. Residue 73–74 coordinates substrate; sequence MW.

In terms of assembly, monomer.

It localises to the periplasm. Functionally, catalyzes the reduction of disulfide bonds. May function in reducing intermolecular disulfides between proteins and small molecules in the periplasm, or keeping a specific subset of periplasmic proteins reduced, or maintaining the periplasm of Chlamydia in a generally reducing state. Seems to be unable to oxidize thiols into disulfides and does not display disulfide bond isomerase activity. The sequence is that of Disulfide bond reductase DsbH (dsbH) from Chlamydia pneumoniae (Chlamydophila pneumoniae).